Here is a 136-residue protein sequence, read N- to C-terminus: Holo-[acyl-carrier-protein] synthase (136 aa).

Residues Asp-8 and Glu-58 each contribute to the Mg(2+) site.

This sequence belongs to the P-Pant transferase superfamily. AcpS family. Mg(2+) serves as cofactor.

It localises to the cytoplasm. It catalyses the reaction apo-[ACP] + CoA = holo-[ACP] + adenosine 3',5'-bisphosphate + H(+). Its function is as follows. Transfers the 4'-phosphopantetheine moiety from coenzyme A to a Ser of acyl-carrier-protein. This chain is Holo-[acyl-carrier-protein] synthase, found in Leuconostoc mesenteroides subsp. mesenteroides (strain ATCC 8293 / DSM 20343 / BCRC 11652 / CCM 1803 / JCM 6124 / NCDO 523 / NBRC 100496 / NCIMB 8023 / NCTC 12954 / NRRL B-1118 / 37Y).